The chain runs to 272 residues: Nitrogenase iron protein (272 aa).

8–15 (GKGGIGKS) is a binding site for ATP. Cys-94 serves as a coordination point for [4Fe-4S] cluster. Residue Arg-97 is modified to ADP-ribosylarginine; by dinitrogenase reductase ADP-ribosyltransferase. Residue Cys-129 participates in [4Fe-4S] cluster binding.

It belongs to the NifH/BchL/ChlL family. Homodimer. It depends on [4Fe-4S] cluster as a cofactor. The reversible ADP-ribosylation of Arg-97 inactivates the nitrogenase reductase and regulates nitrogenase activity.

The catalysed reaction is N2 + 8 reduced [2Fe-2S]-[ferredoxin] + 16 ATP + 16 H2O = H2 + 8 oxidized [2Fe-2S]-[ferredoxin] + 2 NH4(+) + 16 ADP + 16 phosphate + 6 H(+). Functionally, the key enzymatic reactions in nitrogen fixation are catalyzed by the nitrogenase complex, which has 2 components: the iron protein and the molybdenum-iron protein. This Alkaliphilus metalliredigens (strain QYMF) protein is Nitrogenase iron protein.